Consider the following 129-residue polypeptide: uncharacterized protein (129 aa).

The segment covering 86-96 has biased composition (acidic residues); the sequence is NDGFSSDDEPE. The segment at 86–116 is disordered; sequence NDGFSSDDEPEEHVILTEDNQGEPSETPQAT. Residues 103 to 116 are compositionally biased toward polar residues; it reads EDNQGEPSETPQAT.

The protein belongs to the asfivirus D129L family.

This is an uncharacterized protein from African swine fever virus (strain Badajoz 1971 Vero-adapted) (Ba71V).